A 231-amino-acid chain; its full sequence is Somatolactin-1 (231 aa).

The first 24 residues, 1–24 (MRMIRAIKQGQWAVLLWPYLLTAS), serve as a signal peptide directing secretion. 3 disulfides stabilise this stretch: Cys29/Cys39, Cys89/Cys205, and Cys222/Cys230. Asn145 carries N-linked (GlcNAc...) asparagine glycosylation.

Belongs to the somatotropin/prolactin family. Pituitary gland.

The protein resides in the secreted. The sequence is that of Somatolactin-1 from Sparus aurata (Gilthead sea bream).